Consider the following 557-residue polypeptide: NAD(P)H-quinone oxidoreductase chain 4 (557 aa).

The next 14 helical transmembrane spans lie at 25-45, 57-77, 111-131, 133-153, 157-177, 189-209, 230-250, 264-284, 298-318, 327-347, 353-373, 397-417, 438-458, and 485-505; these read FPWL…VPFI, YALF…LKGF, LILL…PVSF, PKLF…VFAV, LLFF…LAIW, FIIY…AMGF, GFQL…LPIV, TAPV…YALL, FAPL…LTSF, IAYS…SFST, AMLQ…LVGA, FALW…SGFV, IVIA…LLSM, and IYII…PRIM.

Belongs to the complex I subunit 4 family.

Its subcellular location is the cellular thylakoid membrane. It carries out the reaction a plastoquinone + NADH + (n+1) H(+)(in) = a plastoquinol + NAD(+) + n H(+)(out). The enzyme catalyses a plastoquinone + NADPH + (n+1) H(+)(in) = a plastoquinol + NADP(+) + n H(+)(out). Its function is as follows. NDH-1 shuttles electrons from NAD(P)H, via FMN and iron-sulfur (Fe-S) centers, to quinones in the respiratory chain. The immediate electron acceptor for the enzyme in this species is believed to be plastoquinone. Couples the redox reaction to proton translocation (for every two electrons transferred, four hydrogen ions are translocated across the cytoplasmic membrane), and thus conserves the redox energy in a proton gradient. In Prochlorococcus marinus (strain SARG / CCMP1375 / SS120), this protein is NAD(P)H-quinone oxidoreductase chain 4.